The primary structure comprises 223 residues: Endonuclease V (223 aa).

Positions 35 and 103 each coordinate Mg(2+).

It belongs to the endonuclease V family. Requires Mg(2+) as cofactor.

It is found in the cytoplasm. The catalysed reaction is Endonucleolytic cleavage at apurinic or apyrimidinic sites to products with a 5'-phosphate.. DNA repair enzyme involved in the repair of deaminated bases. Selectively cleaves double-stranded DNA at the second phosphodiester bond 3' to a deoxyinosine leaving behind the intact lesion on the nicked DNA. The sequence is that of Endonuclease V from Escherichia coli O139:H28 (strain E24377A / ETEC).